The following is a 69-amino-acid chain: MVNRTEAAQLLKHLDRDKSGKISSQELMEFLHTVNCPFKKEQVEKFIKQHDKDGDGQLNTDELLDVLCS.

EF-hand domains lie at 2 to 37 and 38 to 69; these read VNRTEAAQLLKHLDRDKSGKISSQELMEFLHTVNCP and FKKEQVEKFIKQHDKDGDGQLNTDELLDVLCS. Residues D15, D17, S19, K21, E26, D51, D53, D55, Q57, and E62 each coordinate Ca(2+).

This chain is Calcium-binding protein, found in Schistosoma mansoni (Blood fluke).